We begin with the raw amino-acid sequence, 301 residues long: tRNA pseudouridine synthase B (301 aa).

The active-site Nucleophile is the Asp38.

It belongs to the pseudouridine synthase TruB family. Type 1 subfamily.

It carries out the reaction uridine(55) in tRNA = pseudouridine(55) in tRNA. In terms of biological role, responsible for synthesis of pseudouridine from uracil-55 in the psi GC loop of transfer RNAs. In Limosilactobacillus reuteri (strain DSM 20016) (Lactobacillus reuteri), this protein is tRNA pseudouridine synthase B.